Consider the following 121-residue polypeptide: uncharacterized protein (121 aa).

A run of 3 helical transmembrane segments spans residues 2 to 22 (VFVT…IYTI), 42 to 62 (FICI…YILF), and 89 to 109 (IFFA…LSIF).

Its subcellular location is the membrane. This is an uncharacterized protein from Saccharomyces cerevisiae (strain ATCC 204508 / S288c) (Baker's yeast).